The following is a 445-amino-acid chain: Nuclear envelope integral membrane protein 1 (445 aa).

The first 44 residues, 1–44 (MAGGMKVAVLPAVGAGPWSWGAGGCGAVRLLLVLFGCFVCGSAG), serve as a signal peptide directing secretion. Asn-125 carries an N-linked (GlcNAc...) asparagine glycan. 5 helical membrane-spanning segments follow: residues 161–181 (PKLF…DLLS), 186–206 (FYYS…IIFI), 216–236 (PIYI…QLVF), 245–265 (CYWQ…FAVC), and 289–309 (LCFM…VVIA). Residues 186–297 (FYYSTGMSVG…GLCFMYSSIQ (112 aa)) are a; required for its colocalization with lamins at the nuclear envelope. The interval 336–405 (TVPPRLLTEE…LTPNEVSVHE (70 aa)) is b; required for interaction with RAN-GTP. The tract at residues 336 to 445 (TVPPRLLTEE…LVVQQNSFLT (110 aa)) is required for nuclear localization. Phosphoserine occurs at positions 368, 424, and 425. Over residues 418–430 (ELSEETSSEEEDS) the composition is skewed to acidic residues. The interval 418-445 (ELSEETSSEEEDSDSRYPLVVQQNSFLT) is disordered.

It belongs to the NEMP family. Homooligomer. Interacts with RAN-GTP. Interacts with EMD. Phosphorylation may regulate its interaction with RAN-GTP.

It localises to the nucleus inner membrane. The protein resides in the nucleus envelope. Functionally, together with EMD, contributes to nuclear envelope stiffness in germ cells. Required for female fertility. Essential for normal erythropoiesis. Required for efficient nuclear envelope opening and enucleation during the late stages of erythroblast maturation. In Bos taurus (Bovine), this protein is Nuclear envelope integral membrane protein 1 (NEMP1).